A 143-amino-acid polypeptide reads, in one-letter code: Nucleoside diphosphate kinase (143 aa).

Residues lysine 11, phenylalanine 59, arginine 87, threonine 93, arginine 104, and asparagine 114 each coordinate ATP. The active-site Pros-phosphohistidine intermediate is histidine 117.

It belongs to the NDK family. Homotetramer. It depends on Mg(2+) as a cofactor.

The protein localises to the cytoplasm. The enzyme catalyses a 2'-deoxyribonucleoside 5'-diphosphate + ATP = a 2'-deoxyribonucleoside 5'-triphosphate + ADP. The catalysed reaction is a ribonucleoside 5'-diphosphate + ATP = a ribonucleoside 5'-triphosphate + ADP. Major role in the synthesis of nucleoside triphosphates other than ATP. The ATP gamma phosphate is transferred to the NDP beta phosphate via a ping-pong mechanism, using a phosphorylated active-site intermediate. In Shewanella baltica (strain OS223), this protein is Nucleoside diphosphate kinase.